The primary structure comprises 109 residues: Phosphoribosyl-ATP pyrophosphatase (109 aa).

This sequence belongs to the PRA-PH family.

It is found in the cytoplasm. The catalysed reaction is 1-(5-phospho-beta-D-ribosyl)-ATP + H2O = 1-(5-phospho-beta-D-ribosyl)-5'-AMP + diphosphate + H(+). The protein operates within amino-acid biosynthesis; L-histidine biosynthesis; L-histidine from 5-phospho-alpha-D-ribose 1-diphosphate: step 2/9. This is Phosphoribosyl-ATP pyrophosphatase from Alkalilimnicola ehrlichii (strain ATCC BAA-1101 / DSM 17681 / MLHE-1).